A 486-amino-acid chain; its full sequence is Endoglucanase 16 (486 aa).

An N-terminal signal peptide occupies residues 1-30 (MANYKGRGNVMIRSMLLGLYGIINIVCVNG). Asparagine 29 carries N-linked (GlcNAc...) asparagine glycosylation. Aspartate 87 (nucleophile) is an active-site residue. Catalysis depends on residues histidine 407, aspartate 458, and glutamate 467.

The protein belongs to the glycosyl hydrolase 9 (cellulase E) family.

The protein localises to the secreted. The enzyme catalyses Endohydrolysis of (1-&gt;4)-beta-D-glucosidic linkages in cellulose, lichenin and cereal beta-D-glucans.. The chain is Endoglucanase 16 from Arabidopsis thaliana (Mouse-ear cress).